A 327-amino-acid polypeptide reads, in one-letter code: cAMP-dependent protein kinase regulatory subunit (327 aa).

Residues 1–47 (MTNNISHNQKATEKVEAQNNNNITRKRRGAISSEPLGDKPATPLPNI) are disordered. Positions 1–65 (MTNNISHNQK…RLEQALSNNI (65 aa)) are dimerization and phosphorylation. The Pseudophosphorylation motif signature appears at 27–31 (RRGAI). Residue Ser-32 is modified to Phosphoserine. Residues 66-188 (MFSH…EKVS), Glu-136, Arg-145, 189-327 (ILRH…SQKS), Glu-262, and Arg-271 contribute to the 3',5'-cyclic AMP site.

Belongs to the cAMP-dependent kinase regulatory chain family. In Dictyostelium the holoenzyme is a dimer composed of a regulatory (R) and a catalytic (C) subunit. In the presence of cAMP it dissociates into the active C subunit and an R monomer. In other eukaryotes the holoenzyme is a tetramer composed of 2 regulatory (R) and 2 catalytic (C) subunits. In the presence of cAMP it dissociates into active monomeric C subunits and an R dimer. In terms of processing, the pseudophosphorylation site binds to the substrate-binding region of the catalytic chain but is not phosphorylated. The physiological significance of phosphorylations by other kinases is unclear.

The protein is cAMP-dependent protein kinase regulatory subunit (pkaR) of Dictyostelium discoideum (Social amoeba).